A 266-amino-acid chain; its full sequence is Inositol-1-monophosphatase (266 aa).

Mg(2+)-binding residues include glutamate 69, aspartate 86, leucine 88, and aspartate 89. Substrate is bound at residue glutamate 69. Residues 88–91 (LDGT), arginine 185, and aspartate 214 contribute to the substrate site. Aspartate 214 is a binding site for Mg(2+).

Belongs to the inositol monophosphatase superfamily. Mg(2+) serves as cofactor.

It carries out the reaction a myo-inositol phosphate + H2O = myo-inositol + phosphate. This chain is Inositol-1-monophosphatase (suhB), found in Mesorhizobium japonicum (strain LMG 29417 / CECT 9101 / MAFF 303099) (Mesorhizobium loti (strain MAFF 303099)).